The chain runs to 140 residues: FAD synthase (140 aa).

Residues 9–10, 14–17, Asn-92, and Tyr-119 each bind ATP; these read TF and HPGH.

This sequence belongs to the archaeal FAD synthase family. As to quaternary structure, homodimer. Requires a divalent metal cation as cofactor.

It catalyses the reaction FMN + ATP + H(+) = FAD + diphosphate. It functions in the pathway cofactor biosynthesis; FAD biosynthesis; FAD from FMN: step 1/1. Catalyzes the transfer of the AMP portion of ATP to flavin mononucleotide (FMN) to produce flavin adenine dinucleotide (FAD) coenzyme. This chain is FAD synthase, found in Methanocorpusculum labreanum (strain ATCC 43576 / DSM 4855 / Z).